Reading from the N-terminus, the 1229-residue chain is Chitin synthase 4 (1229 aa).

The disordered stretch occupies residues 1 to 196 (MSLPERPGAK…IVKEGKRKEK (196 aa)). Topologically, residues 1–202 (MSLPERPGAK…RKEKIPEQLR (202 aa)) are cytoplasmic. The span at 18–27 (SYRKSPSRRN) shows a compositional bias: basic residues. A compositionally biased stretch (polar residues) spans 43–66 (GQHQRGPSVNSFAETIRSPNSNIE). The segment covering 92 to 105 (IRPERNRIDRDHPN) has biased composition (basic and acidic residues). Low complexity predominate over residues 137-150 (SGPPSGSNSASGSG). Composition is skewed to basic and acidic residues over residues 164-177 (SGRE…DNTR) and 187-196 (IVKEGKRKEK). Residues 203–223 (PPSAWNVYCAVITFWSPDFIM) form a helical membrane-spanning segment. Residues 224-240 (KCCGMPAKAQRRAWREK) lie on the Extracellular side of the membrane. A helical transmembrane segment spans residues 241–261 (IGLISLILIIMGVVGFLTFGF). The Cytoplasmic portion of the chain corresponds to 262–495 (NQAVCGGPVL…IKVGTVDTDT (234 aa)). A helical transmembrane segment spans residues 496-516 (VGCIAAKVVLYVSLALILSVV). Topologically, residues 517–1054 (GARFTLALIF…LCGTFCFSMQ (538 aa)) are extracellular. 2 disordered regions span residues 539 to 589 (TSQT…RSSF) and 601 to 648 (GAER…DPYA). Residues 568 to 581 (GDVGSSVAGASSSD) show a composition bias toward low complexity. N608, N635, and N1030 each carry an N-linked (GlcNAc...) asparagine glycan. A compositionally biased stretch (polar residues) spans 608-648 (NKSMPTTMASQASGGYMGPSSTAYRETNESRTSFLKSDPYA). Residues 1055-1075 (FVIFIELIGTLVLPAAIAFTF) traverse the membrane as a helical segment. Over 1076–1088 (YVVIISIINQPPQ) the chain is Cytoplasmic. A helical membrane pass occupies residues 1089–1109 (IIPLVLLGLILGLPAILIIIT). The Extracellular portion of the chain corresponds to 1110 to 1114 (AHSWS). A helical transmembrane segment spans residues 1115–1135 (YVLWMLIYLLSLPVWNFVLPA). Residues 1136–1229 (YAFWKFDDFS…QQYDEYYSDA (94 aa)) are Cytoplasmic-facing. A disordered region spans residues 1210-1229 (WASAPPHHHQQQYDEYYSDA).

Belongs to the chitin synthase family. Class IV subfamily.

It localises to the cell membrane. It catalyses the reaction [(1-&gt;4)-N-acetyl-beta-D-glucosaminyl](n) + UDP-N-acetyl-alpha-D-glucosamine = [(1-&gt;4)-N-acetyl-beta-D-glucosaminyl](n+1) + UDP + H(+). Its function is as follows. Polymerizes chitin, a structural polymer of the cell wall and septum, by transferring the sugar moiety of UDP-GlcNAc to the non-reducing end of the growing chitin polymer. Might function as a negative regulator on expression of other CHS genes. This Pyricularia oryzae (strain 70-15 / ATCC MYA-4617 / FGSC 8958) (Rice blast fungus) protein is Chitin synthase 4.